Here is a 448-residue protein sequence, read N- to C-terminus: Cytoplasmic tRNA 2-thiolation protein 2 (448 aa).

It belongs to the CTU2/NCS2 family.

It is found in the cytoplasm. The protein operates within tRNA modification; 5-methoxycarbonylmethyl-2-thiouridine-tRNA biosynthesis. Its function is as follows. Plays a central role in 2-thiolation of mcm(5)S(2)U at tRNA wobble positions of tRNA(Lys), tRNA(Glu) and tRNA(Gln). May act by forming a heterodimer with NCS6 that ligates sulfur from thiocarboxylated URM1 onto the uridine of tRNAs at wobble position. Prior mcm(5) tRNA modification by the elongator complex is required for 2-thiolation. May also be involved in protein urmylation. In Scheffersomyces stipitis (strain ATCC 58785 / CBS 6054 / NBRC 10063 / NRRL Y-11545) (Yeast), this protein is Cytoplasmic tRNA 2-thiolation protein 2.